A 277-amino-acid polypeptide reads, in one-letter code: Formamidopyrimidine-DNA glycosylase (277 aa).

The active-site Schiff-base intermediate with DNA is the P2. The active-site Proton donor is E3. K59 serves as the catalytic Proton donor; for beta-elimination activity. Positions 96, 115, and 158 each coordinate DNA. The FPG-type zinc-finger motif lies at 243 to 277 (WVYGRGGNPCRRCGGEILREKRAGRSTHFCPRCQK). The active-site Proton donor; for delta-elimination activity is R267.

Belongs to the FPG family. In terms of assembly, monomer. Requires Zn(2+) as cofactor.

It carries out the reaction Hydrolysis of DNA containing ring-opened 7-methylguanine residues, releasing 2,6-diamino-4-hydroxy-5-(N-methyl)formamidopyrimidine.. The enzyme catalyses 2'-deoxyribonucleotide-(2'-deoxyribose 5'-phosphate)-2'-deoxyribonucleotide-DNA = a 3'-end 2'-deoxyribonucleotide-(2,3-dehydro-2,3-deoxyribose 5'-phosphate)-DNA + a 5'-end 5'-phospho-2'-deoxyribonucleoside-DNA + H(+). Functionally, involved in base excision repair of DNA damaged by oxidation or by mutagenic agents. Acts as a DNA glycosylase that recognizes and removes damaged bases. Has a preference for oxidized purines, such as 7,8-dihydro-8-oxoguanine (8-oxoG). Has AP (apurinic/apyrimidinic) lyase activity and introduces nicks in the DNA strand. Cleaves the DNA backbone by beta-delta elimination to generate a single-strand break at the site of the removed base with both 3'- and 5'-phosphates. This is Formamidopyrimidine-DNA glycosylase from Heliobacterium modesticaldum (strain ATCC 51547 / Ice1).